A 270-amino-acid chain; its full sequence is Dermonecrotic toxin LsaSicTox-alphaIB1av (270 aa).

The active site involves histidine 2. The Mg(2+) site is built by glutamate 22 and aspartate 24. The active-site Nucleophile is histidine 38. Cystine bridges form between cysteine 42-cysteine 48 and cysteine 44-cysteine 187. Residue aspartate 82 coordinates Mg(2+).

Belongs to the arthropod phospholipase D family. Class II subfamily. The cofactor is Mg(2+). As to expression, expressed by the venom gland.

The protein localises to the secreted. It catalyses the reaction an N-(acyl)-sphingosylphosphocholine = an N-(acyl)-sphingosyl-1,3-cyclic phosphate + choline. The enzyme catalyses an N-(acyl)-sphingosylphosphoethanolamine = an N-(acyl)-sphingosyl-1,3-cyclic phosphate + ethanolamine. The catalysed reaction is a 1-acyl-sn-glycero-3-phosphocholine = a 1-acyl-sn-glycero-2,3-cyclic phosphate + choline. It carries out the reaction a 1-acyl-sn-glycero-3-phosphoethanolamine = a 1-acyl-sn-glycero-2,3-cyclic phosphate + ethanolamine. In terms of biological role, dermonecrotic toxins cleave the phosphodiester linkage between the phosphate and headgroup of certain phospholipids (sphingolipid and lysolipid substrates), forming an alcohol (often choline) and a cyclic phosphate. This toxin acts on sphingomyelin (SM). It may also act on ceramide phosphoethanolamine (CPE), lysophosphatidylcholine (LPC) and lysophosphatidylethanolamine (LPE), but not on lysophosphatidylserine (LPS), and lysophosphatidylglycerol (LPG). It acts by transphosphatidylation, releasing exclusively cyclic phosphate products as second products. Induces dermonecrosis, hemolysis, increased vascular permeability, edema, inflammatory response, and platelet aggregation. This is Dermonecrotic toxin LsaSicTox-alphaIB1av from Loxosceles sabina (Tucson recluse spider).